A 258-amino-acid polypeptide reads, in one-letter code: UPF0246 protein Pnuc_0753 (258 aa).

It belongs to the UPF0246 family.

This Polynucleobacter asymbioticus (strain DSM 18221 / CIP 109841 / QLW-P1DMWA-1) (Polynucleobacter necessarius subsp. asymbioticus) protein is UPF0246 protein Pnuc_0753.